Consider the following 570-residue polypeptide: Sulfite reductase [NADPH] hemoprotein beta-component (570 aa).

Positions 434, 440, 479, and 483 each coordinate [4Fe-4S] cluster. Residue cysteine 483 coordinates siroheme.

Belongs to the nitrite and sulfite reductase 4Fe-4S domain family. As to quaternary structure, alpha(8)-beta(8). The alpha component is a flavoprotein, the beta component is a hemoprotein. Requires siroheme as cofactor. The cofactor is [4Fe-4S] cluster.

The enzyme catalyses hydrogen sulfide + 3 NADP(+) + 3 H2O = sulfite + 3 NADPH + 4 H(+). It functions in the pathway sulfur metabolism; hydrogen sulfide biosynthesis; hydrogen sulfide from sulfite (NADPH route): step 1/1. Functionally, component of the sulfite reductase complex that catalyzes the 6-electron reduction of sulfite to sulfide. This is one of several activities required for the biosynthesis of L-cysteine from sulfate. This Salmonella dublin (strain CT_02021853) protein is Sulfite reductase [NADPH] hemoprotein beta-component.